Reading from the N-terminus, the 190-residue chain is MRIAGIILAGGQGRRMGREKALVPLSGVPLIARVLALAPQVEAVAISANGDPGRFGLGLPVLPDRPGESGLGPMAGIRAGLDWAAGIGAEALVSTATDTPFLPEDLVERLAAAAPAHAQSFGRDHYTAALWRVATVPRIDALFAADERRIARLSGGAVAVPFDTTPDPFANLNTPEDLARAEDRLRQNAP.

Residues 8 to 10 (LAG), Lys-20, Asp-64, and Asp-98 each bind GTP. Asp-98 serves as a coordination point for Mg(2+).

This sequence belongs to the MobA family. Monomer. Mg(2+) is required as a cofactor.

The protein resides in the cytoplasm. It carries out the reaction Mo-molybdopterin + GTP + H(+) = Mo-molybdopterin guanine dinucleotide + diphosphate. In terms of biological role, transfers a GMP moiety from GTP to Mo-molybdopterin (Mo-MPT) cofactor (Moco or molybdenum cofactor) to form Mo-molybdopterin guanine dinucleotide (Mo-MGD) cofactor. The polypeptide is Molybdenum cofactor guanylyltransferase (Rhodobacter capsulatus (Rhodopseudomonas capsulata)).